The following is a 408-amino-acid chain: Collagen and calcium-binding EGF domain-containing protein 1 (408 aa).

Positions 1 to 35 (MVPPPLPSRGGAAKRQLGKSLGPLLLLLALGHTWT) are cleaved as a signal peptide. The EGF-like; calcium-binding domain maps to 135–176 (DIDECATSNTTLCAHICINTMGSYHCECREGYILEDDGRTCT). 3 cysteine pairs are disulfide-bonded: C139–C151, C147–C160, and C162–C175. A glycan (N-linked (GlcNAc...) asparagine) is linked at N143. The N-linked (GlcNAc...) asparagine glycan is linked to N183. 2 disordered regions span residues 246–335 (YLPG…GPPG) and 361–408 (HRTH…NFYP). Collagen-like domains are found at residues 247-292 (LPGP…PMGP) and 302-335 (GRRGPVGPPGAPGRHGSKGERGAPGPPGSPGPPG). Positions 272–281 (PGMPGPPGQP) are enriched in pro residues. A compositionally biased stretch (low complexity) spans 283 to 294 (PRGSMGPMGPSP). The segment covering 325-334 (PGPPGSPGPP) has biased composition (pro residues). Residue S387 is glycosylated (O-linked (Xyl...) (chondroitin sulfate) serine). Residues 390–402 (DYSRRTEARDPEA) are compositionally biased toward basic and acidic residues.

The protein belongs to the CCBE1 family.

The protein resides in the secreted. Its function is as follows. Required for lymphangioblast budding and angiogenic sprouting from venous endothelium during embryogenesis. This is Collagen and calcium-binding EGF domain-containing protein 1 (Ccbe1) from Mus musculus (Mouse).